A 309-amino-acid polypeptide reads, in one-letter code: Porphobilinogen deaminase (309 aa).

Residue Cys-241 is modified to S-(dipyrrolylmethanemethyl)cysteine.

It belongs to the HMBS family. As to quaternary structure, monomer. Dipyrromethane is required as a cofactor.

It catalyses the reaction 4 porphobilinogen + H2O = hydroxymethylbilane + 4 NH4(+). Its pathway is porphyrin-containing compound metabolism; protoporphyrin-IX biosynthesis; coproporphyrinogen-III from 5-aminolevulinate: step 2/4. In terms of biological role, tetrapolymerization of the monopyrrole PBG into the hydroxymethylbilane pre-uroporphyrinogen in several discrete steps. In Desulforudis audaxviator (strain MP104C), this protein is Porphobilinogen deaminase.